The primary structure comprises 292 residues: Elongation factor Ts (292 aa).

Residues 80 to 83 (TDFV) are involved in Mg(2+) ion dislocation from EF-Tu.

The protein belongs to the EF-Ts family.

The protein localises to the cytoplasm. Functionally, associates with the EF-Tu.GDP complex and induces the exchange of GDP to GTP. It remains bound to the aminoacyl-tRNA.EF-Tu.GTP complex up to the GTP hydrolysis stage on the ribosome. This Cupriavidus metallidurans (strain ATCC 43123 / DSM 2839 / NBRC 102507 / CH34) (Ralstonia metallidurans) protein is Elongation factor Ts.